We begin with the raw amino-acid sequence, 118 residues long: Large ribosomal subunit protein uL18 (118 aa).

Belongs to the universal ribosomal protein uL18 family. In terms of assembly, part of the 50S ribosomal subunit; part of the 5S rRNA/L5/L18/L25 subcomplex. Contacts the 5S and 23S rRNAs.

Functionally, this is one of the proteins that bind and probably mediate the attachment of the 5S RNA into the large ribosomal subunit, where it forms part of the central protuberance. This chain is Large ribosomal subunit protein uL18, found in Rickettsia conorii (strain ATCC VR-613 / Malish 7).